A 329-amino-acid polypeptide reads, in one-letter code: Pantothenate kinase (329 aa).

Residue 107–114 (GSVAVGKS) coordinates ATP.

The protein belongs to the prokaryotic pantothenate kinase family.

It is found in the cytoplasm. The enzyme catalyses (R)-pantothenate + ATP = (R)-4'-phosphopantothenate + ADP + H(+). The protein operates within cofactor biosynthesis; coenzyme A biosynthesis; CoA from (R)-pantothenate: step 1/5. The polypeptide is Pantothenate kinase (Streptomyces avermitilis (strain ATCC 31267 / DSM 46492 / JCM 5070 / NBRC 14893 / NCIMB 12804 / NRRL 8165 / MA-4680)).